Reading from the N-terminus, the 349-residue chain is MTHHETSAVDASSASMHVRSTIDVPPDLVVGLLGSADENLRALERMLSADLHVRGNTVAFSGEPADVALAERAISELVAIVASGHPLTPEVVRHGVAMLVGTGNESPAEVLTLDILLRRGKTVRPKTLNQKRYVDAIDANTIVFGIGPAGTGKTYLAMAKAVNALQTKQVTRIILTRPAVEAGERLGFLPGTLSEKIDPYLRPLYDALYDMMDPELIPKLMSSGVIEVASLAYMRGRTLNDAFIVLDEAQNTTAEQMKMFLTRLGFGSKVVVTGDVTQIDLPGGARSGLRAAVDILEHIDDIYVAELASVDVVRHRLVSEIVDAYAEYEEHDLGMNRAARRASGARNRR.

Gly147–Thr154 is a binding site for ATP.

This sequence belongs to the PhoH family.

Its subcellular location is the cytoplasm. The sequence is that of PhoH-like protein from Mycobacterium leprae (strain TN).